Here is a 138-residue protein sequence, read N- to C-terminus: Transcription antitermination protein NusB (138 aa).

The protein belongs to the NusB family.

Involved in transcription antitermination. Required for transcription of ribosomal RNA (rRNA) genes. Binds specifically to the boxA antiterminator sequence of the ribosomal RNA (rrn) operons. The polypeptide is Transcription antitermination protein NusB (Helicobacter pylori (strain G27)).